A 401-amino-acid chain; its full sequence is All trans-polyprenyl-diphosphate synthase PDSS2 (401 aa).

This sequence belongs to the FPP/GGPP synthase family. As to quaternary structure, heterotetramer composed of 2 PDSS1/DPS1 and 2 PDSS2/DLP1 subunits.

It is found in the mitochondrion. It catalyses the reaction 7 isopentenyl diphosphate + (2E,6E)-farnesyl diphosphate = all-trans-decaprenyl diphosphate + 7 diphosphate. It carries out the reaction 6 isopentenyl diphosphate + (2E,6E)-farnesyl diphosphate = all-trans-nonaprenyl diphosphate + 6 diphosphate. Its pathway is cofactor biosynthesis; ubiquinone biosynthesis. In terms of biological role, heterotetrameric enzyme that catalyzes the condensation of farnesyl diphosphate (FPP), which acts as a primer, and isopentenyl diphosphate (IPP) to produce prenyl diphosphates of varying chain lengths and participates in the determination of the side chain of ubiquinone. Supplies nona and decaprenyl diphosphate, the precursors for the side chain of the isoprenoid quinones ubiquinone-9 (Q9) and ubiquinone-10 (Q10) respectively. The enzyme adds isopentenyl diphosphate molecules sequentially to farnesyl diphosphate with trans stereochemistry. May play a role during cerebellar development. May regulate mitochondrial respiratory chain function. The sequence is that of All trans-polyprenyl-diphosphate synthase PDSS2 from Rattus norvegicus (Rat).